We begin with the raw amino-acid sequence, 204 residues long: Probable dTDP-4-oxo-2,6-dideoxy-D-glucose 3,5-epimerase (204 aa).

Residues arginine 21, glutamate 26, glutamine 45–asparagine 47, lysine 70, and histidine 117 contribute to the substrate site. Tyrosine 130 serves as the catalytic Proton donor. Glutamate 141 provides a ligand contact to substrate. Residues valine 164–proline 204 form a disordered region.

The protein belongs to the dTDP-4-dehydrorhamnose 3,5-epimerase family.

The protein operates within antibiotic biosynthesis. Functionally, involved in the biosynthesis of one of the two 2,6-deoxysugars, dTDP-L-oleandrose, attached to the macrolactone ring oleandolide to produce the aglycone antibiotic oleandomycin. Probably catalyzes the conversion of dTDP-4-keto-2,6-dideoxy-alpha-D-glucose to dTDP-4-keto-2,6-dideoxy-beta-L-galactose. This is Probable dTDP-4-oxo-2,6-dideoxy-D-glucose 3,5-epimerase from Streptomyces antibioticus.